Reading from the N-terminus, the 110-residue chain is Flagellar hook-basal body complex protein FliE (110 aa).

It belongs to the FliE family.

It is found in the bacterial flagellum basal body. In Pseudomonas entomophila (strain L48), this protein is Flagellar hook-basal body complex protein FliE.